A 353-amino-acid chain; its full sequence is Ribosome biogenesis protein BRX1 homolog (353 aa).

Basic residues predominate over residues 1–10 (MAATKRKRRG). A disordered region spans residues 1–46 (MAATKRKRRGGLAVQAKKLKRDAKDGKLPAKANDVSEEAAEEEKDR). One can recognise a Brix domain in the interval 60–249 (ERILIFSSRG…LIKIFQGSFG (190 aa)). Lys-160 participates in a covalent cross-link: Glycyl lysine isopeptide (Lys-Gly) (interchain with G-Cter in SUMO2). Ser-261 is modified (phosphoserine). Position 276 is an N6-acetyllysine (Lys-276). Glycyl lysine isopeptide (Lys-Gly) (interchain with G-Cter in SUMO2) cross-links involve residues Lys-314 and Lys-322.

Belongs to the BRX1 family.

The protein localises to the nucleus. Its subcellular location is the nucleolus. In terms of biological role, required for biogenesis of the 60S ribosomal subunit. The protein is Ribosome biogenesis protein BRX1 homolog (BRIX1) of Bos taurus (Bovine).